A 193-amino-acid chain; its full sequence is Potassium-transporting ATPase KdpC subunit (193 aa).

The helical transmembrane segment at 8 to 28 threads the bilayer; it reads VVLLIFLTLITGVAYPLLATG.

Belongs to the KdpC family. The system is composed of three essential subunits: KdpA, KdpB and KdpC.

Its subcellular location is the cell inner membrane. Functionally, part of the high-affinity ATP-driven potassium transport (or Kdp) system, which catalyzes the hydrolysis of ATP coupled with the electrogenic transport of potassium into the cytoplasm. This subunit acts as a catalytic chaperone that increases the ATP-binding affinity of the ATP-hydrolyzing subunit KdpB by the formation of a transient KdpB/KdpC/ATP ternary complex. The sequence is that of Potassium-transporting ATPase KdpC subunit from Photorhabdus laumondii subsp. laumondii (strain DSM 15139 / CIP 105565 / TT01) (Photorhabdus luminescens subsp. laumondii).